Here is a 399-residue protein sequence, read N- to C-terminus: MERAIKNFLSQESAGGILLMIAVALAMIMANSPLSGMYQGFLDTEMQVRVGSLDIDKTLIHWINDGLMALFFMLIGLEVKRELLEGALSSAAQASLPTFAAVGGMVFPAGIYLLFNYGDPVTQAGWAIPAATDIAFALGVMALLGSRVPVSLKVFLLALAIIDDLGVVVIIAMFYSTDLSMLSLIVAGIAILGLVGLNRKGVTALGPYGVVGLILWIAVLKSGVHATLAGVIIAFCIPLRAKDGSSPSESLEHSLHPWSTFIILPIFAFANAGVDLSPMSFGDLLSPVPVGIALGLLLGKPLGVLVFSYIGVKLKMAVLPEGMGWKHIAPVALMCGIGFTMSMFISSLAFVGDAEAYGDFARLGILVGSFASAIIGYFWLAKVLPEVDVAKESKKGEIA.

11 helical membrane-spanning segments follow: residues alanine 14–leucine 34, leucine 59–valine 79, serine 95–phenylalanine 115, alanine 124–leucine 144, valine 154–phenylalanine 174, threonine 177–leucine 197, leucine 213–isoleucine 233, phenylalanine 261–phenylalanine 281, valine 290–isoleucine 310, valine 331–valine 351, and leucine 363–valine 383.

This sequence belongs to the NhaA Na(+)/H(+) (TC 2.A.33) antiporter family.

The protein localises to the cell inner membrane. It carries out the reaction Na(+)(in) + 2 H(+)(out) = Na(+)(out) + 2 H(+)(in). Na(+)/H(+) antiporter that extrudes sodium in exchange for external protons. In Shewanella sediminis (strain HAW-EB3), this protein is Na(+)/H(+) antiporter NhaA.